A 1015-amino-acid chain; its full sequence is PHD finger protein 20-like protein 1 (1015 aa).

A Tudor 1 domain is found at 11-71 (ITFEIGARLE…SNRLRPLERP (61 aa)). Residues Lys75 and Lys79 each participate in a glycyl lysine isopeptide (Lys-Gly) (interchain with G-Cter in SUMO2) cross-link. Residues 85–141 (FDFKAGEEVLARWTDCRYYPAKIEAINKEGTFTVQFYDGVIRCLKRMHIKAMPEDAK) enclose the Tudor 2 domain. Disordered regions lie at residues 183-206 (AKNK…RDGG) and 309-367 (EQAI…KAPK). Composition is skewed to polar residues over residues 186-197 (KTGSKPRTSANS) and 315-346 (KPQS…SSGK). Position 368 is a phosphoserine (Ser368). Disordered stretches follow at residues 389-455 (VINK…SSVP) and 478-513 (CGSE…NPTS). The span at 404-415 (PCKHSERRRRSQ) shows a compositional bias: basic residues. Ser432 is subject to Phosphoserine. 2 stretches are compositionally biased toward polar residues: residues 443–453 (SISSQNQQESS) and 480–489 (SEVTGSQAPD). Lys530 is covalently cross-linked (Glycyl lysine isopeptide (Lys-Gly) (interchain with G-Cter in SUMO2)). A compositionally biased stretch (basic and acidic residues) spans 539–565 (EKTSTAFGKRKEKDKERKEKRDKDHYK). Residues 539–585 (EKTSTAFGKRKEKDKERKEKRDKDHYKPKQKKKKKKKKKSKQHDYSD) are disordered. Positions 566–579 (PKQKKKKKKKKKSK) are enriched in basic residues. The PHD-type zinc finger occupies 681-729 (IVRCICELDEENGFMIQCEECLCWQHSVCMGLLEDSIPEQYICYICRDP). A Glycyl lysine isopeptide (Lys-Gly) (interchain with G-Cter in SUMO2) cross-link involves residue Lys849. Polar residues predominate over residues 859–878 (HSYQKPQSFSQDCHSLTDPG). The disordered stretch occupies residues 859 to 889 (HSYQKPQSFSQDCHSLTDPGSSDDDDVSSFE). Residues 879 to 889 (SSDDDDVSSFE) show a composition bias toward acidic residues. Lys907 bears the N6-acetyllysine mark.

Interacts with methylated DNMT1 (DNMT1K142me1). Interacts with SOX2.

Its subcellular location is the nucleus. Functionally, is a negative regulator of proteasomal degradation of a set of methylated proteins, including DNMT1 and SOX2. Involved in the maintainance of embryonic stem cells pluripotency, through the regulation of SOX2 levels. The sequence is that of PHD finger protein 20-like protein 1 (Phf20l1) from Rattus norvegicus (Rat).